Consider the following 197-residue polypeptide: Phosphoheptose isomerase (197 aa).

An SIS domain is found at 37–197 (MLQCLMNDGK…CIDSVLLEGM (161 aa)). 52 to 54 (NGG) is a substrate binding site. Zn(2+) contacts are provided by H61 and E65. Substrate is bound by residues E65, 94–95 (ND), 120–122 (STS), S125, and Q175. Residues Q175 and H183 each coordinate Zn(2+).

It belongs to the SIS family. GmhA subfamily. As to quaternary structure, homotetramer. The cofactor is Zn(2+).

It is found in the cytoplasm. It catalyses the reaction 2 D-sedoheptulose 7-phosphate = D-glycero-alpha-D-manno-heptose 7-phosphate + D-glycero-beta-D-manno-heptose 7-phosphate. Its pathway is carbohydrate biosynthesis; D-glycero-D-manno-heptose 7-phosphate biosynthesis; D-glycero-alpha-D-manno-heptose 7-phosphate and D-glycero-beta-D-manno-heptose 7-phosphate from sedoheptulose 7-phosphate: step 1/1. Functionally, catalyzes the isomerization of sedoheptulose 7-phosphate in D-glycero-D-manno-heptose 7-phosphate. This is Phosphoheptose isomerase from Neisseria meningitidis serogroup C / serotype 2a (strain ATCC 700532 / DSM 15464 / FAM18).